A 375-amino-acid chain; its full sequence is Aminomethyltransferase (375 aa).

The protein belongs to the GcvT family. As to quaternary structure, the glycine cleavage system is composed of four proteins: P, T, L and H.

It catalyses the reaction N(6)-[(R)-S(8)-aminomethyldihydrolipoyl]-L-lysyl-[protein] + (6S)-5,6,7,8-tetrahydrofolate = N(6)-[(R)-dihydrolipoyl]-L-lysyl-[protein] + (6R)-5,10-methylene-5,6,7,8-tetrahydrofolate + NH4(+). In terms of biological role, the glycine cleavage system catalyzes the degradation of glycine. This chain is Aminomethyltransferase, found in Ralstonia nicotianae (strain ATCC BAA-1114 / GMI1000) (Ralstonia solanacearum).